A 278-amino-acid polypeptide reads, in one-letter code: 2,5-diketo-D-gluconic acid reductase A (278 aa).

Y50 (proton donor) is an active-site residue. Residue H108 participates in substrate binding. Position 188–242 (188–242) interacts with NADP(+); that stretch reads GPLGQGKYDLFGAEPVTAAAAAHGKTPAQAVLRWHLQKGFVVFPKSVRRERLEEN. The disordered stretch occupies residues 259–278; sequence DAMDPGDGSGRVSAHPDEVD.

The protein belongs to the aldo/keto reductase family. As to quaternary structure, monomer.

The protein localises to the cytoplasm. The enzyme catalyses 2-dehydro-L-idonate + NADP(+) = 2,5-didehydro-D-gluconate + NADPH + H(+). Its activity is regulated as follows. Inhibited by Zn(2+), Fe(3+), Cu(2+) and Ni(2+). Functionally, catalyzes the reduction of 2,5-diketo-D-gluconic acid (25DKG) to 2-keto-L-gulonic acid (2KLG). 5-keto-D-fructose and dihydroxyacetone can also serve as substrates. 25DKGR-A exhibits a greater selectivity for the substrate and higher thermal stability than 25DKGR-B. This Corynebacterium sp. (strain ATCC 31090) protein is 2,5-diketo-D-gluconic acid reductase A (dkgA).